The primary structure comprises 416 residues: Sulfoquinovosyl glycerol-binding protein SmoF (416 aa).

Positions 1 to 29 are cleaved as a signal peptide; that stretch reads MTLKTIRGKALMGAALCATMLTFSGQAFA. Residue Gln40 coordinates 3-(6-sulfo-alpha-D-quinovosyl)glycerol. A 6-sulfo-D-quinovose-binding site is contributed by His41. The 3-(6-sulfo-alpha-D-quinovosyl)glycerol site is built by Ser71, Asp95, Asp141, Gly194, Thr248, Gly303, Trp304, and Arg373. The 6-sulfo-D-quinovose site is built by Gly303, Trp304, and Arg373.

This sequence belongs to the bacterial solute-binding protein 1 family. As to quaternary structure, the complex is probably composed of two ATP-binding proteins (SmoE), two transmembrane proteins (SmoG and SmoH) and a solute-binding protein (SmoF).

Its subcellular location is the periplasm. Functionally, part of the ABC transporter complex SmoEFGH involved in sulfoquinovosyl glycerol (SQGro) uptake. Binds sulfoquinovosyl glycerol (SQGro). Can also bind sulfoquinovose (SQ), methyl alpha-sulfoquinovoside (SQMe) and a short-chain derivative of sulfoquinovosyl diacylglycerol (SQDG). Cannot bind D-glucose and D-glucuronic acid. This Agrobacterium fabrum (strain C58 / ATCC 33970) (Agrobacterium tumefaciens (strain C58)) protein is Sulfoquinovosyl glycerol-binding protein SmoF.